Consider the following 472-residue polypeptide: MKAETPSFEAHQFVRVRRGDAVRRLIQRDKTPLAVLLMAAVVGTLAGLVGVAFEKSVNWVQNQRIGALAQVADHWYLVWPLAFILSALLAMVGYFLVRRFAPEAGGSGIPEIEGALEELRPVRWWRVLPVKFIGGMGTLGAGMVLGREGPMVQLGGNIGRMVLDIFRMRSPEARHTLLATGAASGLSAAFNAPLAGILFIIEEMRPQFRYNLISIKAVFTGVIMSSIVFRIFNGEAAIIEVGKLSNAPVNTLWLYLVLGMLFGCFGPLFNFLVLRTQDIFQRIHGGNIKTWVLMGGVIGGICGLLGLMQPSAVGGGFNLIPIAAAGNFSVGLLLFIFIARVVTTLICFSSGAPGGIFAPMLALGTLLGTAFGMAAIPLFPAYHLDAGTFAIAGMGALLAASVRAPLTGIVLVLEMTDNYQLILPMIITCLGATLLAQFLGGKPLYSTILQRTLAKQEAEQAAKAQQAPRENT.

The Cytoplasmic segment spans residues 1–32; it reads MKAETPSFEAHQFVRVRRGDAVRRLIQRDKTP. A helical transmembrane segment spans residues 33–69; the sequence is LAVLLMAAVVGTLAGLVGVAFEKSVNWVQNQRIGALA. Residues 70 to 76 are Periplasmic-facing; it reads QVADHWY. A helical transmembrane segment spans residues 77–100; the sequence is LVWPLAFILSALLAMVGYFLVRRF. A Selectivity filter part_1 motif is present at residues 106–110; that stretch reads GSGIP. Residue Ser-107 coordinates chloride. Residues 109-116 constitute an intramembrane region (helical); sequence IPEIEGAL. Over 117-123 the chain is Cytoplasmic; it reads EELRPVR. Transmembrane regions (helical) follow at residues 124 to 141 and 148 to 166; these read WWRV…TLGA and EGPM…LDIF. The Selectivity filter part_2 motif lies at 146-150; that stretch reads GREGP. At 167–176 the chain is on the cytoplasmic side; that stretch reads RMRSPEARHT. Intramembrane regions (helical) lie at residues 177-189 and 193-201; these read LLAT…LSAA and PLAGILFII. At 202-214 the chain is on the cytoplasmic side; that stretch reads EEMRPQFRYNLIS. A helical transmembrane segment spans residues 215 to 232; the sequence is IKAVFTGVIMSSIVFRIF. At 233 to 252 the chain is on the periplasmic side; it reads NGEAAIIEVGKLSNAPVNTL. Residues 253–281 traverse the membrane as a helical segment; that stretch reads WLYLVLGMLFGCFGPLFNFLVLRTQDIFQ. Residues 282-287 are Cytoplasmic-facing; it reads RIHGGN. The helical transmembrane segment at 288-309 threads the bilayer; sequence IKTWVLMGGVIGGICGLLGLMQ. Topologically, residues 310-329 are periplasmic; that stretch reads PSAVGGGFNLIPIAAAGNFS. 2 helical membrane-spanning segments follow: residues 330-349 and 355-376; these read VGLL…ICFS and GIFA…MAAI. The Selectivity filter part_3 motif lies at 355-359; that stretch reads GIFAP. Chloride contacts are provided by Ile-356 and Phe-357. The Periplasmic segment spans residues 377–386; it reads PLFPAYHLDA. The segment at residues 387–401 is an intramembrane region (helical); sequence GTFAIAGMGALLAAS. Positions 402–404 form an intramembrane region, note=Loop between two helices; it reads VRA. An intramembrane region (helical) is located at residues 405–416; it reads PLTGIVLVLEMT. The segment at residues 417-421 is an intramembrane region (note=Loop between two helices); that stretch reads DNYQL. Residues 422–438 traverse the membrane as a helical segment; that stretch reads ILPMIITCLGATLLAQF. At 439 to 472 the chain is on the cytoplasmic side; that stretch reads LGGKPLYSTILQRTLAKQEAEQAAKAQQAPRENT. Residue Tyr-445 participates in chloride binding.

This sequence belongs to the chloride channel (TC 2.A.49) family. ClcA subfamily. Homodimer.

Its subcellular location is the cell inner membrane. It carries out the reaction 2 chloride(in) + H(+)(out) = 2 chloride(out) + H(+)(in). Proton-coupled chloride transporter. Functions as antiport system and exchanges two chloride ions for 1 proton. Probably acts as an electrical shunt for an outwardly-directed proton pump that is linked to amino acid decarboxylation, as part of the extreme acid resistance (XAR) response. This is H(+)/Cl(-) exchange transporter ClcA from Klebsiella pneumoniae (strain 342).